A 72-amino-acid polypeptide reads, in one-letter code: Large ribosomal subunit protein uL29 (72 aa).

The protein belongs to the universal ribosomal protein uL29 family.

This is Large ribosomal subunit protein uL29 from Caldicellulosiruptor bescii (strain ATCC BAA-1888 / DSM 6725 / KCTC 15123 / Z-1320) (Anaerocellum thermophilum).